Reading from the N-terminus, the 232-residue chain is Large ribosomal subunit protein uL1 (232 aa).

It belongs to the universal ribosomal protein uL1 family. In terms of assembly, part of the 50S ribosomal subunit.

Binds directly to 23S rRNA. The L1 stalk is quite mobile in the ribosome, and is involved in E site tRNA release. Functionally, protein L1 is also a translational repressor protein, it controls the translation of the L11 operon by binding to its mRNA. The protein is Large ribosomal subunit protein uL1 of Thermosipho melanesiensis (strain DSM 12029 / CIP 104789 / BI429).